Reading from the N-terminus, the 458-residue chain is MKQINDYKGKRVLVLGFGISGLNAAYLLQKLGATVVANDQQVPKDPRVVADLEGAGITAVTGSNPLSLAEEGFDLVVKNPGIPYDTPLVAAFVKKGTPIITELELGYQVFAGHLISVTGSNGKTTTTTLIEQMVAMGNPHRVEYAGNIGVSFSKVAEELGPDDTIVTEASSFQLLGAPTYRPHIAVITNIFANHLDYHKTRQNYIDAKLGITRNQTKDDYLVINWDKEEWQKLAKRTNATVVPFSRLAKSQEGAYQKGGDLYWRQERIMAAKDVVLIGPQNVENALAAIAAAKLSGVANEAIVRVLTTFTGVRHRLQYVLDYEGRRFYNDSKSTDIEATEVALQGFEQPVILLAGGLDRGYTFERLVPYFREHVKALIVFGESKDKMKAAGEQAGVKTIVESTDAVTAVPEAWRLSEPGDVILLSPANASWDQFPNFEVRGDRFIEAVEQLTGKKEEN.

119–125 (GSNGKTT) contacts ATP.

This sequence belongs to the MurCDEF family.

It is found in the cytoplasm. It carries out the reaction UDP-N-acetyl-alpha-D-muramoyl-L-alanine + D-glutamate + ATP = UDP-N-acetyl-alpha-D-muramoyl-L-alanyl-D-glutamate + ADP + phosphate + H(+). Its pathway is cell wall biogenesis; peptidoglycan biosynthesis. Cell wall formation. Catalyzes the addition of glutamate to the nucleotide precursor UDP-N-acetylmuramoyl-L-alanine (UMA). The sequence is that of UDP-N-acetylmuramoylalanine--D-glutamate ligase from Limosilactobacillus fermentum (strain NBRC 3956 / LMG 18251) (Lactobacillus fermentum).